The sequence spans 235 residues: Adenosine 5'-phosphosulfate reductase (235 aa).

Cys121, Cys122, Cys204, and Cys207 together coordinate [4Fe-4S] cluster. Cys230 serves as the catalytic Nucleophile; cysteine thiosulfonate intermediate.

The protein belongs to the PAPS reductase family. CysH subfamily. [4Fe-4S] cluster serves as cofactor.

It localises to the cytoplasm. The catalysed reaction is [thioredoxin]-disulfide + sulfite + AMP + 2 H(+) = adenosine 5'-phosphosulfate + [thioredoxin]-dithiol. The protein operates within sulfur metabolism; hydrogen sulfide biosynthesis; sulfite from sulfate. Its function is as follows. Catalyzes the formation of sulfite from adenosine 5'-phosphosulfate (APS) using thioredoxin as an electron donor. The polypeptide is Adenosine 5'-phosphosulfate reductase (Geobacillus kaustophilus (strain HTA426)).